The primary structure comprises 439 residues: Tol-Pal system protein TolB (439 aa).

The N-terminal stretch at 1 to 21 (MRFRLALSLLSLALFAAPAAA) is a signal peptide.

The protein belongs to the TolB family. As to quaternary structure, the Tol-Pal system is composed of five core proteins: the inner membrane proteins TolA, TolQ and TolR, the periplasmic protein TolB and the outer membrane protein Pal. They form a network linking the inner and outer membranes and the peptidoglycan layer.

It localises to the periplasm. In terms of biological role, part of the Tol-Pal system, which plays a role in outer membrane invagination during cell division and is important for maintaining outer membrane integrity. The protein is Tol-Pal system protein TolB of Rhizorhabdus wittichii (strain DSM 6014 / CCUG 31198 / JCM 15750 / NBRC 105917 / EY 4224 / RW1) (Sphingomonas wittichii).